The following is a 501-amino-acid chain: 2,3-bisphosphoglycerate-independent phosphoglycerate mutase (501 aa).

Aspartate 12 and serine 62 together coordinate Mn(2+). The active-site Phosphoserine intermediate is the serine 62. Substrate-binding positions include histidine 121, 150–151, arginine 182, arginine 188, 253–256, and lysine 322; these read RD and RSDR. Aspartate 389, histidine 393, aspartate 430, histidine 431, and histidine 449 together coordinate Mn(2+).

Belongs to the BPG-independent phosphoglycerate mutase family. In terms of assembly, monomer. It depends on Mn(2+) as a cofactor.

It catalyses the reaction (2R)-2-phosphoglycerate = (2R)-3-phosphoglycerate. Its pathway is carbohydrate degradation; glycolysis; pyruvate from D-glyceraldehyde 3-phosphate: step 3/5. Functionally, catalyzes the interconversion of 2-phosphoglycerate and 3-phosphoglycerate. This chain is 2,3-bisphosphoglycerate-independent phosphoglycerate mutase, found in Ehrlichia ruminantium (strain Gardel).